The sequence spans 248 residues: Probable transcriptional regulatory protein Psyr_1407 (248 aa).

This sequence belongs to the TACO1 family.

The protein localises to the cytoplasm. This Pseudomonas syringae pv. syringae (strain B728a) protein is Probable transcriptional regulatory protein Psyr_1407.